We begin with the raw amino-acid sequence, 368 residues long: Outer membrane protein assembly factor BamC (368 aa).

A signal peptide spans 1-18 (MTTKFFIGTAIAVSVLSA). Cys-19 carries the N-palmitoyl cysteine lipid modification. Cys-19 is lipidated: S-diacylglycerol cysteine.

The protein belongs to the BamC family. As to quaternary structure, part of the Bam complex.

The protein localises to the cell outer membrane. Part of the outer membrane protein assembly complex, which is involved in assembly and insertion of beta-barrel proteins into the outer membrane. The polypeptide is Outer membrane protein assembly factor BamC (Pseudoalteromonas atlantica (strain T6c / ATCC BAA-1087)).